A 574-amino-acid chain; its full sequence is Proline--tRNA ligase (574 aa).

Belongs to the class-II aminoacyl-tRNA synthetase family. ProS type 1 subfamily. In terms of assembly, homodimer.

The protein localises to the cytoplasm. It carries out the reaction tRNA(Pro) + L-proline + ATP = L-prolyl-tRNA(Pro) + AMP + diphosphate. In terms of biological role, catalyzes the attachment of proline to tRNA(Pro) in a two-step reaction: proline is first activated by ATP to form Pro-AMP and then transferred to the acceptor end of tRNA(Pro). As ProRS can inadvertently accommodate and process non-cognate amino acids such as alanine and cysteine, to avoid such errors it has two additional distinct editing activities against alanine. One activity is designated as 'pretransfer' editing and involves the tRNA(Pro)-independent hydrolysis of activated Ala-AMP. The other activity is designated 'posttransfer' editing and involves deacylation of mischarged Ala-tRNA(Pro). The misacylated Cys-tRNA(Pro) is not edited by ProRS. In Buchnera aphidicola subsp. Baizongia pistaciae (strain Bp), this protein is Proline--tRNA ligase.